Consider the following 196-residue polypeptide: Carnitine operon protein CaiE (196 aa).

A disordered region spans residues 173–196 (TQPLRQMEENRPRLQGTTDVTPKR). Positions 187-196 (QGTTDVTPKR) are enriched in polar residues.

The protein belongs to the transferase hexapeptide repeat family.

Its pathway is amine and polyamine metabolism; carnitine metabolism. Overproduction of CaiE stimulates the activity of CaiB and CaiD. This is Carnitine operon protein CaiE from Escherichia coli O7:K1 (strain IAI39 / ExPEC).